Here is a 122-residue protein sequence, read N- to C-terminus: Large ribosomal subunit protein uL14 (122 aa).

Belongs to the universal ribosomal protein uL14 family. Part of the 50S ribosomal subunit. Forms a cluster with proteins L3 and L19. In the 70S ribosome, L14 and L19 interact and together make contacts with the 16S rRNA in bridges B5 and B8.

Binds to 23S rRNA. Forms part of two intersubunit bridges in the 70S ribosome. The protein is Large ribosomal subunit protein uL14 of Chlamydia muridarum (strain MoPn / Nigg).